Consider the following 755-residue polypeptide: Serine/threonine-protein kinase GA29083 (755 aa).

The span at 18 to 52 (QASASGSGTPKKTAASSAAAQNSKQLLDQLSQQQK) shows a compositional bias: low complexity. The tract at residues 18 to 128 (QASASGSGTP…GSANTNGSAS (111 aa)) is disordered. Basic and acidic residues-rich tracts occupy residues 53–66 (AQEE…RDCD) and 74–84 (EPEKDLDELRD). The span at 87–99 (GSLTGSGSVGKSN) shows a compositional bias: polar residues. Low complexity predominate over residues 100-128 (GSLSGASSTTSAPAGTSTPGSANTNGSAS). Doublecortin domains follow at residues 157–243 (HRIK…VDYN) and 314–397 (RIVT…VEDF). Residues 484–742 (YTLSQIIGDG…SEDILDHYWT (259 aa)) enclose the Protein kinase domain. ATP is bound by residues 490–498 (IGDGNFAIV) and lysine 513. The active-site Proton acceptor is the aspartate 605.

It belongs to the protein kinase superfamily. CAMK Ser/Thr protein kinase family. CaMK subfamily.

It carries out the reaction L-seryl-[protein] + ATP = O-phospho-L-seryl-[protein] + ADP + H(+). The catalysed reaction is L-threonyl-[protein] + ATP = O-phospho-L-threonyl-[protein] + ADP + H(+). The chain is Serine/threonine-protein kinase GA29083 from Drosophila pseudoobscura pseudoobscura (Fruit fly).